We begin with the raw amino-acid sequence, 380 residues long: Chaperone protein DnaJ (380 aa).

A J domain is found at 5-69 (DLYKVLGVEK…QKRAQYDQFG (65 aa)). Residues 140-222 (GKKTTITYNR…CGGSGHTEQS (83 aa)) form a CR-type zinc finger. The Zn(2+) site is built by Cys-153, Cys-156, Cys-170, Cys-173, Cys-196, Cys-199, Cys-210, and Cys-213. CXXCXGXG motif repeat units lie at residues 153–160 (CETCGGSG), 170–177 (CSKCHGAG), 196–203 (CDVCHGTG), and 210–217 (CATCGGSG).

The protein belongs to the DnaJ family. As to quaternary structure, homodimer. Requires Zn(2+) as cofactor.

It localises to the cytoplasm. Participates actively in the response to hyperosmotic and heat shock by preventing the aggregation of stress-denatured proteins and by disaggregating proteins, also in an autonomous, DnaK-independent fashion. Unfolded proteins bind initially to DnaJ; upon interaction with the DnaJ-bound protein, DnaK hydrolyzes its bound ATP, resulting in the formation of a stable complex. GrpE releases ADP from DnaK; ATP binding to DnaK triggers the release of the substrate protein, thus completing the reaction cycle. Several rounds of ATP-dependent interactions between DnaJ, DnaK and GrpE are required for fully efficient folding. Also involved, together with DnaK and GrpE, in the DNA replication of plasmids through activation of initiation proteins. This is Chaperone protein DnaJ from Lactiplantibacillus plantarum (strain ATCC BAA-793 / NCIMB 8826 / WCFS1) (Lactobacillus plantarum).